The sequence spans 240 residues: 1-(5-phosphoribosyl)-5-[(5-phosphoribosylamino)methylideneamino] imidazole-4-carboxamide isomerase (240 aa).

Aspartate 8 serves as the catalytic Proton acceptor. Residue aspartate 129 is the Proton donor of the active site.

It belongs to the HisA/HisF family.

Its subcellular location is the cytoplasm. It catalyses the reaction 1-(5-phospho-beta-D-ribosyl)-5-[(5-phospho-beta-D-ribosylamino)methylideneamino]imidazole-4-carboxamide = 5-[(5-phospho-1-deoxy-D-ribulos-1-ylimino)methylamino]-1-(5-phospho-beta-D-ribosyl)imidazole-4-carboxamide. It participates in amino-acid biosynthesis; L-histidine biosynthesis; L-histidine from 5-phospho-alpha-D-ribose 1-diphosphate: step 4/9. This chain is 1-(5-phosphoribosyl)-5-[(5-phosphoribosylamino)methylideneamino] imidazole-4-carboxamide isomerase, found in Caldanaerobacter subterraneus subsp. tengcongensis (strain DSM 15242 / JCM 11007 / NBRC 100824 / MB4) (Thermoanaerobacter tengcongensis).